Here is a 35-residue protein sequence, read N- to C-terminus: SDSKIGDGCFGLPLDHIGSVSGLGCNRPVQNRPKK.

Cys9 and Cys25 are joined by a disulfide.

Expressed by the venom gland.

It is found in the secreted. Its function is as follows. Snake venom natriuretic peptide that exhibits vasoactive and probable hypotensive activity. Is only weakly active on natriuretic peptide receptor-C (NPR3). Stimulates cGMP production through the natriuretic peptide receptor 1 (NPR1) with moderate potencies for the rat NPR1 (EC(50)=2020 nM), and very weak potencies over human NPR1 (15% activation at 10 uM). In vivo, does not impact systolic and diastolic blood pressure, as well as heart rate, when intravenously injected in conscious rabbits. Does not affect the bradycardia due to cardiac afferent stimulation (Bezold-Jarisch reflex). The protein is Natriuretic peptide TNPa of Oxyuranus microlepidotus (Inland taipan).